A 432-amino-acid chain; its full sequence is Peptidase B (432 aa).

Mn(2+)-binding residues include K196 and D201. K208 is an active-site residue. Residues D219, D278, and E280 each contribute to the Mn(2+) site. Residue R282 is part of the active site.

The protein belongs to the peptidase M17 family. In terms of assembly, homohexamer. The cofactor is Mn(2+).

It localises to the cytoplasm. The enzyme catalyses Release of an N-terminal amino acid, Xaa, from a peptide or arylamide. Xaa is preferably Glu or Asp but may be other amino acids, including Leu, Met, His, Cys and Gln.. Probably plays an important role in intracellular peptide degradation. This chain is Peptidase B, found in Vibrio parahaemolyticus serotype O3:K6 (strain RIMD 2210633).